The primary structure comprises 1287 residues: Pullulanase A (1287 aa).

A signal peptide spans 1–44 (MRKTPSHTEKKMVYSIRSLKNGTGSVLIGASLVLLAMATPTISS). The disordered stretch occupies residues 42 to 139 (ISSDESTPTT…VTTETKAEEP (98 aa)). Residues 48–61 (TPTTNEPNNRNTTT) show a composition bias toward low complexity. The span at 79–90 (DISSPGNANASL) shows a compositional bias: polar residues. Composition is skewed to low complexity over residues 99–113 (TEPT…DPAP) and 122–133 (EPTTSTSPVTTE). Residues 163-165 (WTW), Trp-175, Asp-221, 270-272 (WYW), Trp-283, Lys-325, and Asn-330 each bind substrate. 2 residues coordinate Ca(2+): Ser-668 and Tyr-670. Substrate-binding positions include 674 to 675 (YD) and Phe-750. Asp-785 (nucleophile) is an active-site residue. Residue Glu-814 is the Proton donor of the active site. Trp-816 lines the substrate pocket. Residues Met-835, Thr-838, and Asp-839 each contribute to the Ca(2+) site. The substrate site is built by Asp-846, Arg-849, and Tyr-856. Positions 889 and 893 each coordinate Ca(2+). Substrate-binding positions include Asn-903, Lys-976, and 996-998 (DSY). A Ca(2+)-binding site is contributed by Asp-999. A disordered region spans residues 1147-1255 (VSQNGTSHES…TPDRQAELPN (109 aa)). The segment covering 1156 to 1203 (STAEEKPDSTPSKPEHQNEASHPAHQDPAPEARPDSTKPDAKVADAEN) has biased composition (basic and acidic residues). Low complexity predominate over residues 1212–1225 (SQAEQPAQEAQASS). The span at 1228–1239 (EAVRKESVENSS) shows a compositional bias: basic and acidic residues. Positions 1253–1257 (LPNTG) match the LPXTG sorting signal motif. Position 1256 is a pentaglycyl murein peptidoglycan amidated threonine (Thr-1256). Positions 1257–1287 (GIKNENKLLFAGISLLALLGLGFLLKNKKEN) are cleaved as a propeptide — removed by sortase.

Belongs to the glycosyl hydrolase 13 family.

Its subcellular location is the secreted. It localises to the cell wall. It is found in the cell surface. It catalyses the reaction Hydrolysis of (1-&gt;6)-alpha-D-glucosidic linkages in pullulan, amylopectin and glycogen, and in the alpha- and beta-limit dextrins of amylopectin and glycogen.. Inhibited by 4-O-alpha-D-glucopyranosylmoranoline (G1M). Its function is as follows. Virulence factor. Involved in the degradation of glycogen of the mammalian host cells. Hydrolyzes the alpha-1,6-branchpoints of glycogen. Hydrolyzes pullulan. Does not hydrolyze dextran. Binds to mouse lung alveolar type II cells that are rich in glycogen stores. Is an alpha-glucan-specific carbohydrate-binding protein, which binds to amylose (pure alpha-(1,4)-linked glucose), amylopectin (alpha-(1,4)-linked glucose with alpha-(1,6) branch points), pullulan (linear polymer of mixed alpha-(1,4)- and alpha-(1,6)-linked glucose) and glycogen (similar to amylopectin with more frequent alpha-(1,6) branch points) in vitro. Does not bind to dextran (a linear polymer of alpha-(1,6)-linked glucose). In Streptococcus pneumoniae, this protein is Pullulanase A.